The following is a 27-amino-acid chain: Cruzioseptin-14 (27 aa).

In terms of tissue distribution, expressed by the skin glands.

The protein resides in the secreted. In terms of biological role, has antimicrobial activity. In Cruziohyla calcarifer (Splendid leaf frog), this protein is Cruzioseptin-14.